Reading from the N-terminus, the 188-residue chain is Elongation factor P (188 aa).

Lys-34 is modified (N6-(3,6-diaminohexanoyl)-5-hydroxylysine).

This sequence belongs to the elongation factor P family. In terms of processing, may be beta-lysylated on the epsilon-amino group of Lys-34 by the combined action of EpmA and EpmB, and then hydroxylated on the C5 position of the same residue by EpmC (if this protein is present). Lysylation is critical for the stimulatory effect of EF-P on peptide-bond formation. The lysylation moiety may extend toward the peptidyltransferase center and stabilize the terminal 3-CCA end of the tRNA. Hydroxylation of the C5 position on Lys-34 may allow additional potential stabilizing hydrogen-bond interactions with the P-tRNA.

Its subcellular location is the cytoplasm. It functions in the pathway protein biosynthesis; polypeptide chain elongation. Its function is as follows. Involved in peptide bond synthesis. Alleviates ribosome stalling that occurs when 3 or more consecutive Pro residues or the sequence PPG is present in a protein, possibly by augmenting the peptidyl transferase activity of the ribosome. Modification of Lys-34 is required for alleviation. This Actinobacillus pleuropneumoniae serotype 5b (strain L20) protein is Elongation factor P.